We begin with the raw amino-acid sequence, 73 residues long: Stigmurin (73 aa).

The N-terminal stretch at Met1–Ala22 is a signal peptide. Residue Lys39 is modified to Lysine amide. A propeptide spanning residues Glu45–Tyr73 is cleaved from the precursor.

This sequence belongs to the non-disulfide-bridged peptide (NDBP) superfamily. Short antimicrobial peptide (group 4) family. In terms of tissue distribution, expressed by the venom gland.

The protein resides in the secreted. Its function is as follows. Antimicrobial peptide with activity against Gram-positive bacterial strains (S.aureus (MIC=2-140 uM), methicillin-resistant S.aureus (MRSA) (MIC=8-17 uM), S.epidermidis (MIC=1.17 uM), and the yeasts C.albicans, C.krusei, and C.glabrata (MIC=34-69 uM)). Acts by disrupting the cell membrane (observed on outer layer of the S.aureus). Is not active against Gram-negative bacteria (E.coli, E.Cloacae, P.aeruginosa), and the Gram-positive bacterium E.faecalis. Also shows toxicity against several cell lines, but possess low hemolytic activity at the highest concentration tested. Also shows antiparasitic activity against Trypanosoma cruzi by decreasing the viability of the epimastigote and trypomastigote forms of the parasite. Displays high hydroxyl radical scavenging activity (antioxidant action). In a wound infection model, the topical application of this peptide demonstrates antibacterial effects, as well as an ability to accelerate wound closure speed, which suggests the induction of tissue repair. In the model of polymicrobial sepsis, it exhibits an antibiotic effect, reducing the levels of microorganisms in the infectious focus and the inflammatory responses in the lung and cecum of septic animals. The sequence is that of Stigmurin from Tityus stigmurus (Brazilian scorpion).